Here is a 68-residue protein sequence, read N- to C-terminus: ATP synthase protein 8 (68 aa).

Residues 8-24 form a helical membrane-spanning segment; it reads TWLTIITPTLLALFLIT. N6-acetyllysine; alternate is present on Lys-54. Lys-54 carries the post-translational modification N6-succinyllysine; alternate. Lys-57 carries the post-translational modification N6-acetyllysine.

Belongs to the ATPase protein 8 family. F-type ATPases have 2 components, CF(1) - the catalytic core - and CF(0) - the membrane proton channel. Component of an ATP synthase complex composed of ATP5PB, ATP5MC1, ATP5F1E, ATP5PD, ATP5ME, ATP5PF, ATP5MF, MT-ATP6, MT-ATP8, ATP5F1A, ATP5F1B, ATP5F1D, ATP5F1C, ATP5PO, ATP5MG, ATP5MK and ATP5MJ. Interacts with PRICKLE3.

It is found in the mitochondrion membrane. In terms of biological role, mitochondrial membrane ATP synthase (F(1)F(0) ATP synthase or Complex V) produces ATP from ADP in the presence of a proton gradient across the membrane which is generated by electron transport complexes of the respiratory chain. F-type ATPases consist of two structural domains, F(1) - containing the extramembraneous catalytic core and F(0) - containing the membrane proton channel, linked together by a central stalk and a peripheral stalk. During catalysis, ATP synthesis in the catalytic domain of F(1) is coupled via a rotary mechanism of the central stalk subunits to proton translocation. Part of the complex F(0) domain. Minor subunit located with subunit a in the membrane. The chain is ATP synthase protein 8 (MT-ATP8) from Pongo pygmaeus (Bornean orangutan).